The following is a 61-amino-acid chain: Large ribosomal subunit protein uL29 (61 aa).

The protein belongs to the universal ribosomal protein uL29 family.

This is Large ribosomal subunit protein uL29 from Nitratidesulfovibrio vulgaris (strain ATCC 29579 / DSM 644 / CCUG 34227 / NCIMB 8303 / VKM B-1760 / Hildenborough) (Desulfovibrio vulgaris).